Reading from the N-terminus, the 332-residue chain is DNA-directed RNA polymerase subunit alpha (332 aa).

The tract at residues 1 to 227 (MKKFAETPFL…VMYSQMSVFN (227 aa)) is alpha N-terminal domain (alpha-NTD). The segment at 248–332 (KELVIRIDDL…LRRKLEQLKA (85 aa)) is alpha C-terminal domain (alpha-CTD).

The protein belongs to the RNA polymerase alpha chain family. In terms of assembly, homodimer. The RNAP catalytic core consists of 2 alpha, 1 beta, 1 beta' and 1 omega subunit. When a sigma factor is associated with the core the holoenzyme is formed, which can initiate transcription.

It catalyses the reaction RNA(n) + a ribonucleoside 5'-triphosphate = RNA(n+1) + diphosphate. In terms of biological role, DNA-dependent RNA polymerase catalyzes the transcription of DNA into RNA using the four ribonucleoside triphosphates as substrates. The polypeptide is DNA-directed RNA polymerase subunit alpha (Aliarcobacter butzleri (strain RM4018) (Arcobacter butzleri)).